The primary structure comprises 453 residues: Trigger factor (453 aa).

A PPIase FKBP-type domain is found at 171-256 (GDRVTVSFKG…ATLVEAPKDT (86 aa)).

This sequence belongs to the FKBP-type PPIase family. Tig subfamily.

Its subcellular location is the cytoplasm. It catalyses the reaction [protein]-peptidylproline (omega=180) = [protein]-peptidylproline (omega=0). Involved in protein export. Acts as a chaperone by maintaining the newly synthesized protein in an open conformation. Functions as a peptidyl-prolyl cis-trans isomerase. This chain is Trigger factor, found in Rhodopseudomonas palustris (strain BisA53).